The following is a 253-amino-acid chain: Triosephosphate isomerase (253 aa).

Residue Asn-9 to Lys-11 participates in substrate binding. The Electrophile role is filled by His-95. Catalysis depends on Glu-167, which acts as the Proton acceptor. Substrate is bound by residues Gly-173, Ser-213, and Gly-234–Gly-235. Ser-213 is subject to Phosphoserine.

This sequence belongs to the triosephosphate isomerase family. As to quaternary structure, homodimer.

It is found in the cytoplasm. The catalysed reaction is D-glyceraldehyde 3-phosphate = dihydroxyacetone phosphate. Its pathway is carbohydrate biosynthesis; gluconeogenesis. It functions in the pathway carbohydrate degradation; glycolysis; D-glyceraldehyde 3-phosphate from glycerone phosphate: step 1/1. Involved in the gluconeogenesis. Catalyzes stereospecifically the conversion of dihydroxyacetone phosphate (DHAP) to D-glyceraldehyde-3-phosphate (G3P). The polypeptide is Triosephosphate isomerase (Geobacillus thermodenitrificans (strain NG80-2)).